Consider the following 248-residue polypeptide: MTRYKAIISYDGSGFYGYQVQPNTRTVQAEIEKALTKMHKGKTVRITASGRTDTGVHAKGQVIHFDSELDITAEKFQKALQVMTPFDISFLTVEEVPDDFHARFGTVGKEYRYVVKRTKIFDPFSRDFALHYPYELDISKMKLASKRLIGEHDFTSFCSARTERDSKVRTLYSIDFYEEDDETLVIAFQGNGFLYNMVRILTGTLLDAGQGRISPDDISKALLARDRQKLISKTAPPQGLYLWRVDYE.

Catalysis depends on D53, which acts as the Nucleophile. Y111 contributes to the substrate binding site.

The protein belongs to the tRNA pseudouridine synthase TruA family. In terms of assembly, homodimer.

The enzyme catalyses uridine(38/39/40) in tRNA = pseudouridine(38/39/40) in tRNA. In terms of biological role, formation of pseudouridine at positions 38, 39 and 40 in the anticodon stem and loop of transfer RNAs. This Listeria monocytogenes serotype 4a (strain HCC23) protein is tRNA pseudouridine synthase A.